We begin with the raw amino-acid sequence, 197 residues long: MSSKEQKTPEGQAPEEIIMDRHEEIEAVEPEASAEQVDPRDEKIANLEAQLAEAQTRERDGILRVKAEMENLRRRTELDIEKAHKFALEKFINELLPVIDSLDRALEVADKANPDMSAMVEGIELTLKSMLDVVRKFGVEVIAETNVPLDPNVHQAIAMVESDDVAPGNVLGIMQKGYTLNGRTIRAAMVTVAKAKA.

Positions 1–40 (MSSKEQKTPEGQAPEEIIMDRHEEIEAVEPEASAEQVDPR) are disordered.

The protein belongs to the GrpE family. Homodimer.

Its subcellular location is the cytoplasm. Its function is as follows. Participates actively in the response to hyperosmotic and heat shock by preventing the aggregation of stress-denatured proteins, in association with DnaK and GrpE. It is the nucleotide exchange factor for DnaK and may function as a thermosensor. Unfolded proteins bind initially to DnaJ; upon interaction with the DnaJ-bound protein, DnaK hydrolyzes its bound ATP, resulting in the formation of a stable complex. GrpE releases ADP from DnaK; ATP binding to DnaK triggers the release of the substrate protein, thus completing the reaction cycle. Several rounds of ATP-dependent interactions between DnaJ, DnaK and GrpE are required for fully efficient folding. This chain is Protein GrpE, found in Shigella flexneri serotype 5b (strain 8401).